The sequence spans 602 residues: Translation factor GUF1 homolog, organellar chromatophore (602 aa).

In terms of domain architecture, tr-type G spans 7-189 (SRIRNFCIIA…AIVERIPPPV (183 aa)). Residues 16-23 (AHIDHGKS), 82-86 (DTPGH), and 136-139 (NKID) each bind GTP.

The protein belongs to the TRAFAC class translation factor GTPase superfamily. Classic translation factor GTPase family. LepA subfamily.

Its subcellular location is the plastid. The protein resides in the organellar chromatophore. The enzyme catalyses GTP + H2O = GDP + phosphate + H(+). Functionally, promotes protein synthesis. May act as a fidelity factor of the translation reaction, by catalyzing a one-codon backward translocation of tRNAs on improperly translocated ribosomes. This Paulinella chromatophora protein is Translation factor GUF1 homolog, organellar chromatophore.